Here is a 426-residue protein sequence, read N- to C-terminus: Putative phosphate permease TC_0064 (426 aa).

11 consecutive transmembrane segments (helical) span residues 1 to 21, 37 to 57, 83 to 103, 104 to 124, 140 to 160, 183 to 203, 207 to 227, 260 to 280, 309 to 329, 365 to 385, and 399 to 419; these read MWWLLVCVVIGGFYTAWNIGA, LTLRQAVLIAAVFEFLGAVVL, VFGMTAALFATGVWLQIASFF, GWPVSTTHAIVGGVLGFGIIL, VSWLASPIIGGYFAFLIFSFI, AIIIFALGLILILSGAVARVV, VAFRVVCGLVVFAFAFTIWGV, LVVERIFAYLQIVIACFMSFA, VLFIFMSLGGLGLVFGLATWG, FGFPISTTHVVVGAVLGVGLA, and IVLSWFVTVPAGAALSIMFFL.

The protein belongs to the inorganic phosphate transporter (PiT) (TC 2.A.20) family.

It is found in the cell membrane. Potential transporter for phosphate. This Chlamydia muridarum (strain MoPn / Nigg) protein is Putative phosphate permease TC_0064.